The primary structure comprises 95 residues: Integration host factor subunit beta (95 aa).

The disordered stretch occupies residues 56–76 (RAPRTGRNPKTGSSVDLEGKY).

This sequence belongs to the bacterial histone-like protein family. In terms of assembly, heterodimer of an alpha and a beta chain.

In terms of biological role, this protein is one of the two subunits of integration host factor, a specific DNA-binding protein that functions in genetic recombination as well as in transcriptional and translational control. This Shewanella baltica (strain OS223) protein is Integration host factor subunit beta.